The following is a 358-amino-acid chain: Magnesium-protoporphyrin IX monomethyl ester [oxidative] cyclase 1 (358 aa).

The protein belongs to the AcsF family. Requires Fe cation as cofactor.

The catalysed reaction is Mg-protoporphyrin IX 13-monomethyl ester + 3 NADPH + 3 O2 + 2 H(+) = 3,8-divinyl protochlorophyllide a + 3 NADP(+) + 5 H2O. The protein operates within porphyrin-containing compound metabolism; chlorophyll biosynthesis (light-independent). Its function is as follows. Catalyzes the formation of the isocyclic ring in chlorophyll biosynthesis. Mediates the cyclase reaction, which results in the formation of divinylprotochlorophyllide (Pchlide) characteristic of all chlorophylls from magnesium-protoporphyrin IX 13-monomethyl ester (MgPMME). This is Magnesium-protoporphyrin IX monomethyl ester [oxidative] cyclase 1 from Synechocystis sp. (strain ATCC 27184 / PCC 6803 / Kazusa).